Here is an 88-residue protein sequence, read N- to C-terminus: MANTAQARKRARQAVVQNAHNSALRSRLRTAIKGVRKAVAAGDKTAAAAAFKTAQSTIDSIADKKIVHKNKAARAKSRLSAAIKAMAA.

Residues 1 to 20 (MANTAQARKRARQAVVQNAH) are disordered.

Belongs to the bacterial ribosomal protein bS20 family.

Its function is as follows. Binds directly to 16S ribosomal RNA. In Ralstonia pickettii (strain 12J), this protein is Small ribosomal subunit protein bS20.